A 155-amino-acid polypeptide reads, in one-letter code: Transcriptional repressor NrdR (155 aa).

A zinc finger spans residues 3-34 (CPKCDHNGTRVLDSRPVQDHYSIRRRRECEKC). In terms of domain architecture, ATP-cone spans 49 to 139 (LIIVKKDGNR…VYRQFKDITV (91 aa)).

The protein belongs to the NrdR family. Zn(2+) is required as a cofactor.

Negatively regulates transcription of bacterial ribonucleotide reductase nrd genes and operons by binding to NrdR-boxes. In Exiguobacterium sp. (strain ATCC BAA-1283 / AT1b), this protein is Transcriptional repressor NrdR.